Consider the following 624-residue polypeptide: Bifunctional 3'-phosphoadenosine 5'-phosphosulfate synthase 1 (624 aa).

Residue Met-1 is modified to N-acetylmethionine. Positions Met-1–Ile-225 are adenylyl-sulfate kinase. Lys-12 is modified (N6-acetyllysine). Gly-62 to Thr-67 provides a ligand contact to ATP. Residues Asp-89–Arg-92, Phe-101, Arg-106–Asn-109, Ile-132–Ser-133, Lys-171, and Gly-184–Phe-185 contribute to the adenosine 5'-phosphosulfate site. Residues Cys-207, Cys-212, Gln-419 to Asn-422, Gly-521 to Ala-525, and Ala-563 each bind ATP. The interval Val-234 to Ala-624 is sulfate adenylyltransferase.

In the N-terminal section; belongs to the APS kinase family. This sequence in the C-terminal section; belongs to the sulfate adenylyltransferase family. As to quaternary structure, homodimer. In terms of tissue distribution, expressed in testis, pancreas, kidney, thymus, prostate, ovary, small intestine, colon, leukocytes and liver. Also expressed in high endothelial venules (HEV) cells and in cartilage.

It carries out the reaction sulfate + ATP + H(+) = adenosine 5'-phosphosulfate + diphosphate. It catalyses the reaction adenosine 5'-phosphosulfate + ATP = 3'-phosphoadenylyl sulfate + ADP + H(+). It functions in the pathway sulfur metabolism; sulfate assimilation. Inhibited by chlorate. The kinase activity is subject to inhibition by the substrate adenylyl sulfate. Bifunctional enzyme with both ATP sulfurylase and APS kinase activity, which mediates two steps in the sulfate activation pathway. The first step is the transfer of a sulfate group to ATP to yield adenosine 5'-phosphosulfate (APS), and the second step is the transfer of a phosphate group from ATP to APS yielding 3'-phosphoadenylylsulfate (PAPS: activated sulfate donor used by sulfotransferase). In mammals, PAPS is the sole source of sulfate; APS appears to be only an intermediate in the sulfate-activation pathway. Required for normal biosynthesis of sulfated L-selectin ligands in endothelial cells. The protein is Bifunctional 3'-phosphoadenosine 5'-phosphosulfate synthase 1 (PAPSS1) of Homo sapiens (Human).